We begin with the raw amino-acid sequence, 289 residues long: Zinc finger matrin-type protein 3 (289 aa).

2 consecutive Matrin-type zinc fingers follow at residues 70 to 100 and 147 to 177; these read LFCK…KLRN and DYCK…RLRL. Disordered regions lie at residues 180-202 and 265-289; these read AQSH…EGSE and ESKQ…GYVQ. Residues 245–275 form a Matrin-type 3 zinc finger; that stretch reads FYCSMCNVGAGEEVEFRQHLESKQHKSKVSE. The segment covering 265–282 has biased composition (basic and acidic residues); it reads ESKQHKSKVSEQRYRSEM.

As to quaternary structure, interacts with dsRNA. Highly expressed in brain, gut, lung, and testis.

It is found in the nucleus. The protein localises to the nucleolus. Functionally, acts as a bona fide target gene of p53/TP53. May play a role in the TP53-dependent growth regulatory pathway. May contribute to TP53-mediated apoptosis by regulation of TP53 expression and translocation to the nucleus and nucleolus. This chain is Zinc finger matrin-type protein 3, found in Rattus norvegicus (Rat).